An 80-amino-acid chain; its full sequence is Small ribosomal subunit protein bS16 (80 aa).

This sequence belongs to the bacterial ribosomal protein bS16 family.

In Acholeplasma laidlawii (strain PG-8A), this protein is Small ribosomal subunit protein bS16.